Here is a 421-residue protein sequence, read N- to C-terminus: Medium-chain specific acyl-CoA dehydrogenase, mitochondrial (421 aa).

The N-terminal 25 residues, 1–25, are a transit peptide targeting the mitochondrion; the sequence is MAAGFGRCCRVLRSISRFHWRSQHT. Lysine 69 bears the N6-acetyllysine; alternate mark. Lysine 69 carries the post-translational modification N6-succinyllysine; alternate. 158 to 167 lines the FAD pocket; it reads YCVTEPGAGS. Serine 167 is an octanoyl-CoA binding site. At lysine 179 the chain carries N6-succinyllysine. Residue 191-193 participates in FAD binding; sequence WIT. N6-acetyllysine; alternate is present on residues lysine 212, lysine 217, lysine 259, and lysine 271. An N6-succinyllysine; alternate mark is found at lysine 212, lysine 217, lysine 259, and lysine 271. Aspartate 278 lines the octanoyl-CoA pocket. Lysine 279 bears the N6-acetyllysine mark. Arginine 281 is an octanoyl-CoA binding site. Lysine 301 carries the post-translational modification N6-acetyllysine. FAD-binding positions include 306-308 and 316-317; these read RKT and HQ. The residue at position 351 (threonine 351) is a Phosphothreonine. Residues 374–378 and 401–405 contribute to the FAD site; these read QILGG and EGTSQ. Glutamate 401 contributes to the octanoyl-CoA binding site. The active-site Proton acceptor is glutamate 401.

The protein belongs to the acyl-CoA dehydrogenase family. Homotetramer. Interacts with the heterodimeric electron transfer flavoprotein ETF. The cofactor is FAD. In terms of processing, acetylated. Could occur at proximity of the cofactor-binding sites and reduce the catalytic activity. Could be deacetylated by SIRT3.

It is found in the mitochondrion matrix. It catalyses the reaction a medium-chain 2,3-saturated fatty acyl-CoA + oxidized [electron-transfer flavoprotein] + H(+) = a medium-chain (2E)-enoyl-CoA + reduced [electron-transfer flavoprotein]. It carries out the reaction pentanoyl-CoA + oxidized [electron-transfer flavoprotein] + H(+) = (2E)-pentenoyl-CoA + reduced [electron-transfer flavoprotein]. The catalysed reaction is hexanoyl-CoA + oxidized [electron-transfer flavoprotein] + H(+) = (2E)-hexenoyl-CoA + reduced [electron-transfer flavoprotein]. The enzyme catalyses octanoyl-CoA + oxidized [electron-transfer flavoprotein] + H(+) = (2E)-octenoyl-CoA + reduced [electron-transfer flavoprotein]. It catalyses the reaction decanoyl-CoA + oxidized [electron-transfer flavoprotein] + H(+) = (2E)-decenoyl-CoA + reduced [electron-transfer flavoprotein]. It carries out the reaction dodecanoyl-CoA + oxidized [electron-transfer flavoprotein] + H(+) = (2E)-dodecenoyl-CoA + reduced [electron-transfer flavoprotein]. The catalysed reaction is tetradecanoyl-CoA + oxidized [electron-transfer flavoprotein] + H(+) = (2E)-tetradecenoyl-CoA + reduced [electron-transfer flavoprotein]. The enzyme catalyses oxidized [electron-transfer flavoprotein] + hexadecanoyl-CoA + H(+) = (2E)-hexadecenoyl-CoA + reduced [electron-transfer flavoprotein]. The protein operates within lipid metabolism; mitochondrial fatty acid beta-oxidation. Medium-chain specific acyl-CoA dehydrogenase is one of the acyl-CoA dehydrogenases that catalyze the first step of mitochondrial fatty acid beta-oxidation, an aerobic process breaking down fatty acids into acetyl-CoA and allowing the production of energy from fats. The first step of fatty acid beta-oxidation consists in the removal of one hydrogen from C-2 and C-3 of the straight-chain fatty acyl-CoA thioester, resulting in the formation of trans-2-enoyl-CoA. Electron transfer flavoprotein (ETF) is the electron acceptor that transfers electrons to the main mitochondrial respiratory chain via ETF-ubiquinone oxidoreductase (ETF dehydrogenase). Among the different mitochondrial acyl-CoA dehydrogenases, medium-chain specific acyl-CoA dehydrogenase acts specifically on acyl-CoAs with saturated 6 to 12 carbons long primary chains. The chain is Medium-chain specific acyl-CoA dehydrogenase, mitochondrial from Homo sapiens (Human).